A 116-amino-acid polypeptide reads, in one-letter code: Ribosome-binding factor A (116 aa).

The protein belongs to the RbfA family. In terms of assembly, monomer. Binds 30S ribosomal subunits, but not 50S ribosomal subunits or 70S ribosomes.

It is found in the cytoplasm. In terms of biological role, one of several proteins that assist in the late maturation steps of the functional core of the 30S ribosomal subunit. Associates with free 30S ribosomal subunits (but not with 30S subunits that are part of 70S ribosomes or polysomes). Required for efficient processing of 16S rRNA. May interact with the 5'-terminal helix region of 16S rRNA. In Buchnera aphidicola subsp. Cinara cedri (strain Cc), this protein is Ribosome-binding factor A.